A 448-amino-acid chain; its full sequence is Acetate kinase (448 aa).

N7 is a Mg(2+) binding site. Residue K14 coordinates ATP. R91 contacts substrate. Catalysis depends on D148, which acts as the Proton donor/acceptor. ATP-binding positions include 208-212 and 283-285; these read HIGNG and DRR. A Mg(2+)-binding site is contributed by E388.

It belongs to the acetokinase family. In terms of assembly, homodimer. It depends on Mg(2+) as a cofactor. Mn(2+) is required as a cofactor.

The protein resides in the cytoplasm. It catalyses the reaction acetate + ATP = acetyl phosphate + ADP. The protein operates within metabolic intermediate biosynthesis; acetyl-CoA biosynthesis; acetyl-CoA from acetate: step 1/2. In terms of biological role, catalyzes the formation of acetyl phosphate from acetate and ATP. Can also catalyze the reverse reaction. The protein is Acetate kinase of Treponema pallidum (strain Nichols).